A 779-amino-acid polypeptide reads, in one-letter code: Glucan endo-1,3-beta-D-glucosidase 2 (779 aa).

A disordered region spans residues 1–71 (MCYSRQAIPP…SNPLADSQVN (71 aa)). The span at 57–71 (RTPSSSNPLADSQVN) shows a compositional bias: polar residues. The tract at residues 73–309 (DNIFQSPVLS…NGLICQLSAD (237 aa)) is beta-sandwich subdomain. In terms of domain architecture, GH81 spans 73 to 779 (DNIFQSPVLS…WSLAYSGAFS (707 aa)). The alpha/beta subdomain stretch occupies residues 309–400 (DSVPSIDMAA…LTNSFDMQVQ (92 aa)). Residues 375–779 (IASSLDSTVK…WSLAYSGAFS (405 aa)) form a sufficient for catalytic activity region. Residues 415-779 (NKKADYSQEK…WSLAYSGAFS (365 aa)) are (alpha/beta)6 barrel subdomain. D526 is a catalytic residue. The (1,3-beta-D-glucosyl)n site is built by H530, D607, E609, and E613. Residues E609 and E613 contribute to the active site. Residues 678 to 680 (KID) are may provide specificity for triple-helical beta-glucan. Y691 provides a ligand contact to (1,3-beta-D-glucosyl)n.

Belongs to the glycosyl hydrolase 81 family.

The protein resides in the cytoplasm. The catalysed reaction is Hydrolysis of (1-&gt;3)-beta-D-glucosidic linkages in (1-&gt;3)-beta-D-glucans.. Inhibited by mercury ions. In terms of biological role, cleaves internal linkages in 1,3-beta-glucan. The sequence is that of Glucan endo-1,3-beta-D-glucosidase 2 from Saccharomyces cerevisiae (strain ATCC 204508 / S288c) (Baker's yeast).